The following is a 92-amino-acid chain: Co-chaperonin GroES (92 aa).

It belongs to the GroES chaperonin family. As to quaternary structure, heptamer of 7 subunits arranged in a ring. Interacts with the chaperonin GroEL.

Its subcellular location is the cytoplasm. In terms of biological role, together with the chaperonin GroEL, plays an essential role in assisting protein folding. The GroEL-GroES system forms a nano-cage that allows encapsulation of the non-native substrate proteins and provides a physical environment optimized to promote and accelerate protein folding. GroES binds to the apical surface of the GroEL ring, thereby capping the opening of the GroEL channel. In Thermotoga neapolitana, this protein is Co-chaperonin GroES.